The chain runs to 497 residues: Cysteine--tRNA ligase (497 aa).

Position 46 (C46) interacts with Zn(2+). A 'HIGH' region motif is present at residues 48–58 (PTVYSDAHLGH). C237, H262, and E266 together coordinate Zn(2+). The 'KMSKS' region motif lies at 293–297 (KMSKS). ATP is bound at residue K296.

The protein belongs to the class-I aminoacyl-tRNA synthetase family. Monomer. Zn(2+) serves as cofactor.

Its subcellular location is the cytoplasm. It carries out the reaction tRNA(Cys) + L-cysteine + ATP = L-cysteinyl-tRNA(Cys) + AMP + diphosphate. The chain is Cysteine--tRNA ligase from Deinococcus geothermalis (strain DSM 11300 / CIP 105573 / AG-3a).